The chain runs to 534 residues: NAD(P)H-quinone oxidoreductase chain 4 1 (534 aa).

The next 14 helical transmembrane spans lie at 6–26 (IPWL…IPLI), 34–54 (IRWY…TAFW), 87–107 (LSMP…LAAW), 113–133 (PKLF…VFAV), 136–156 (LLLF…LISI), 169–189 (FILY…ALAF), 209–229 (ALEL…LPIF), 243–263 (SAPV…YGLI), 277–297 (FAPL…LTAF), 311–331 (ISHM…GMNG), 332–352 (AVLQ…LSGV), 376–396 (FAMF…SGFV), 418–438 (IAIF…LSML), and 464–484 (IFVA…PKLA).

The protein belongs to the complex I subunit 4 family.

It localises to the cellular thylakoid membrane. It carries out the reaction a plastoquinone + NADH + (n+1) H(+)(in) = a plastoquinol + NAD(+) + n H(+)(out). It catalyses the reaction a plastoquinone + NADPH + (n+1) H(+)(in) = a plastoquinol + NADP(+) + n H(+)(out). Functionally, NDH-1 shuttles electrons from NAD(P)H, via FMN and iron-sulfur (Fe-S) centers, to quinones in the respiratory chain. The immediate electron acceptor for the enzyme in this species is believed to be plastoquinone. Couples the redox reaction to proton translocation (for every two electrons transferred, four hydrogen ions are translocated across the cytoplasmic membrane), and thus conserves the redox energy in a proton gradient. The chain is NAD(P)H-quinone oxidoreductase chain 4 1 from Picosynechococcus sp. (strain ATCC 27264 / PCC 7002 / PR-6) (Agmenellum quadruplicatum).